Consider the following 104-residue polypeptide: Putative Fis-like DNA-binding protein (104 aa).

The H-T-H motif DNA-binding region spans 80–99; it reads QTKASELLGLNRGTLRKKLK.

This sequence belongs to the transcriptional regulatory Fis family.

This chain is Putative Fis-like DNA-binding protein, found in Pseudomonas aeruginosa (strain ATCC 15692 / DSM 22644 / CIP 104116 / JCM 14847 / LMG 12228 / 1C / PRS 101 / PAO1).